Reading from the N-terminus, the 278-residue chain is MCRRPDCGFSFSPGPVILLWCCLLLSIVSSAAVNVAPTAAEKVPAECPELTRRCLLGEVFQGDEYESWLRPLVNVTGRDGPLSQLIRYRPVTPEAANSVLLDEAFLDTLALLYNNPDQLRALLTLLSSDTAPRWMTVMRGYSECGDGSPAVYTCVDDLCRGYDLTRLSYGRSIFTEHVLGFELVPPSLFNVVVAIRNEATRTNRAVRLPVSTAAAPEGITLFYGLYNAVKEFCLRHQLDPPLLRHLDKYYAGLPPELKQTRVNLPAHSRYGPQAVDAR.

The first 32 residues, 1-32 (MCRRPDCGFSFSPGPVILLWCCLLLSIVSSAA), serve as a signal peptide directing secretion. The region spanning 43–256 (VPAECPELTR…DKYYAGLPPE (214 aa)) is the gL betaherpesvirus-type domain. C154 and C159 are joined by a disulfide.

The protein belongs to the herpesviridae glycoprotein L (gL) family. Betaherpesvirinae gL subfamily. Interacts with glycoprotein H (gH); this interaction is necessary for the correct processing and cell surface expression of gH. Forms the envelope pentamer complex (PC) composed of gH, gL, UL128, UL130, and UL131A. The pentamer interacts with host NRP2. Forms the envelope trimer complex composed of gH, gL, and gO. The trimer interacts with host PDGFRA. The trimer also interacts with host EPHA2.

The protein resides in the virion membrane. Its subcellular location is the host cell membrane. It is found in the host Golgi apparatus. It localises to the host trans-Golgi network. Its function is as follows. The heterodimer glycoprotein H-glycoprotein L is required for the fusion of viral and plasma membranes leading to virus entry into the host cell. Acts as a functional inhibitor of gH and maintains gH in an inhibited form. Upon binding to host integrins, gL dissociates from gH leading to activation of the viral fusion glycoproteins gB and gH. In human cytomegalovirus, forms two distincts complexes to mediate viral entry, a trimer and a pentamer at the surface of the virion envelope. The gH-gL-gO trimer is required for infection in fibroblasts by interacting with host PDGFRA, and in glioblastoma cells by interacting with host EPHA2. The gH-gL-UL128-UL130-UL131A pentamer is essential for viral entry in epithelial, endothelial and myeloid cells via interaction with host NRP2. This chain is Envelope glycoprotein L, found in Human cytomegalovirus (strain 119) (HHV-5).